Here is a 195-residue protein sequence, read N- to C-terminus: MRKVVLASASPRRKELLSKLIGNNFEVCVSSYEETPLQEMNVEELVVFHSLEKAKDVALRFDSGIIISADTVVFCDGAILGKPHTLNNAKEMLENISGKSVLAITGMTILDMDSGKCVSEYVSTDVNMKQMSSDEIASYVNSGEPLDKAGAFAIQGKGAVLVESINGDFFNVVGLPLFRLGTILEEMGISIFDDC.

Residue Asp70 is the Proton acceptor of the active site.

It belongs to the Maf family. YhdE subfamily. A divalent metal cation is required as a cofactor.

It is found in the cytoplasm. The enzyme catalyses dTTP + H2O = dTMP + diphosphate + H(+). The catalysed reaction is UTP + H2O = UMP + diphosphate + H(+). Its function is as follows. Nucleoside triphosphate pyrophosphatase that hydrolyzes dTTP and UTP. May have a dual role in cell division arrest and in preventing the incorporation of modified nucleotides into cellular nucleic acids. The protein is dTTP/UTP pyrophosphatase of Methanococcoides burtonii (strain DSM 6242 / NBRC 107633 / OCM 468 / ACE-M).